An 87-amino-acid polypeptide reads, in one-letter code: Small ribosomal subunit protein bS16 (87 aa).

It belongs to the bacterial ribosomal protein bS16 family.

This is Small ribosomal subunit protein bS16 from Onion yellows phytoplasma (strain OY-M).